Consider the following 1163-residue polypeptide: Protein phosphatase 1 regulatory subunit 26 (1163 aa).

A compositionally biased stretch (basic and acidic residues) spans 65 to 83 (HERLTQRGQRAERSRDTRL). Disordered stretches follow at residues 65 to 91 (HERL…AVCK), 144 to 253 (RGGA…TSAR), 266 to 393 (RKPP…KKKL), 463 to 496 (APME…NIDS), 514 to 653 (VGSP…DEDL), 672 to 929 (RDPR…TATA), and 1073 to 1163 (TQPG…GLKL). Polar residues-rich tracts occupy residues 163-179 (HSST…TPGS) and 189-201 (DQGS…MSSE). A compositionally biased stretch (basic and acidic residues) spans 208–236 (IRAEIEQFLNEKRQHENPKCDGFVDKKSD). Residues 273-297 (KMSTQQRNFQPKPTTEPETPVSTKL) show a composition bias toward polar residues. Over residues 315–324 (MPARRSKRIR) the composition is skewed to basic residues. Residues 515 to 535 (GSPQPAQGPLSSPGPSGQPGI) show a composition bias toward low complexity. Composition is skewed to basic and acidic residues over residues 566-581 (KIRE…DHIQ) and 634-645 (ATEKESSEDKSS). Positions 672 to 682 (RDPRASCKKVR) are enriched in basic residues. Residues 766–780 (TGASGHPPSASSPTS) show a composition bias toward low complexity. Acidic residues predominate over residues 783–792 (SAVDSDDSIE). Composition is skewed to basic and acidic residues over residues 793 to 808 (LEIR…ESIR) and 850 to 859 (EGRRGPERAR). Residues 860–871 (TQATGLLSQSGK) show a composition bias toward polar residues. Residues 901–910 (SSAKASPPSR) are compositionally biased toward low complexity. The span at 1105 to 1131 (QQDRRNSASEDKVLDLRYRHRVDREPQ) shows a compositional bias: basic and acidic residues. Position 1111 is a phosphoserine (Ser1111). Composition is skewed to polar residues over residues 1133-1146 (QETL…FSDT) and 1154-1163 (ATVSSKGLKL).

In terms of assembly, interacts with UTP20 and PPP1CA.

The protein resides in the nucleus. Its subcellular location is the nucleolus. In terms of biological role, inhibits phosphatase activity of protein phosphatase 1 (PP1) complexes. May positively regulate cell proliferation. The chain is Protein phosphatase 1 regulatory subunit 26 (Ppp1r26) from Mus musculus (Mouse).